The following is a 275-amino-acid chain: Methylglyoxal reductase DkgA (275 aa).

Residue Y51 is the Proton donor of the active site. H107 is a substrate binding site. An NADP(+)-binding site is contributed by 187-241 (SPLAQGGKGVFDQKVIRDLADKYGKTPAQIVIRWHLDSGLVVIPKSVTPSRIAEN).

This sequence belongs to the aldo/keto reductase family. Monomer.

The protein resides in the cytoplasm. It carries out the reaction hydroxyacetone + NADP(+) = methylglyoxal + NADPH + H(+). It catalyses the reaction a primary alcohol + NADP(+) = an aldehyde + NADPH + H(+). The catalysed reaction is 2-dehydro-L-idonate + NADP(+) = 2,5-didehydro-D-gluconate + NADPH + H(+). Its function is as follows. Aldo-keto reductase that significantly contributes to cellular methylglyoxal detoxification by catalyzing the NADPH-dependent conversion of methylglyoxal to acetol. It also exhibits fairly high activity with glyoxal. Shows broad specificity and can use aromatic aldehydes such as 4-nitrobenzaldehyde, 3-nitrobenzaldehyde and benzaldehyde, and phenylglyoxal. Shows beta-keto ester reductase activity toward ethyl acetoacetate and a variety of 2-substituted derivatives. Also catalyzes the reduction of 2,5-diketo-D-gluconic acid (25DKG) to 2-keto-L-gulonic acid (2KLG) and could be involved in ketogluconate metabolism. However, the specific activity of the enzyme toward 2,5-diketo-D-gluconate was reported to be almost 400-fold lower than its activity toward methylglyoxal. Can catalyze in vitro the NADPH-dependent reduction of furfural, a natural product of lignocellulosic decomposition, to the less toxic product, furfuryl alcohol. However, it is unlikely that furfural is a physiological substrate. This is Methylglyoxal reductase DkgA from Escherichia coli (strain K12).